A 390-amino-acid polypeptide reads, in one-letter code: Isoaspartyl dipeptidase (390 aa).

Zn(2+) is bound by residues histidine 68 and histidine 70. Residues 75-77 (GGE), threonine 106, and tyrosine 137 contribute to the substrate site. Lysine 162 provides a ligand contact to Zn(2+). Residue lysine 162 is modified to N6-carboxylysine. Arginine 169 lines the substrate pocket. Zn(2+) contacts are provided by histidine 201 and histidine 230. Position 233 (arginine 233) interacts with substrate. Aspartate 285 is a binding site for Zn(2+). The active-site Proton acceptor is the aspartate 285. Serine 289 serves as a coordination point for substrate.

This sequence belongs to the peptidase M38 family. Zn(2+) is required as a cofactor. It depends on Co(2+) as a cofactor. Post-translationally, carboxylation allows a single lysine to coordinate two zinc ions.

It is found in the cytoplasm. Its activity is regulated as follows. P-hydroxymercuribenzoate causes a slight inhibition (8 to 17 %). Iodoacetamide, o-iodosobenzoate and ammonium persulfate do not inhibit the enzyme activity. Functionally, catalyzes the hydrolytic cleavage of a subset of L-isoaspartyl (L-beta-aspartyl) dipeptides. Used to degrade proteins damaged by L-isoaspartyl residues formation. The best substrate for the enzyme reported thus far is iso-Asp-Leu. This chain is Isoaspartyl dipeptidase (iadA), found in Escherichia coli (strain K12).